The primary structure comprises 249 residues: 2,3-bisphosphoglycerate-dependent phosphoglycerate mutase (249 aa).

Residues 9–16 (RHGESEWN), 22–23 (TG), R61, 88–91 (ERHY), K99, 115–116 (RR), and 184–185 (GN) contribute to the substrate site. Catalysis depends on H10, which acts as the Tele-phosphohistidine intermediate. E88 serves as the catalytic Proton donor/acceptor.

It belongs to the phosphoglycerate mutase family. BPG-dependent PGAM subfamily.

It catalyses the reaction (2R)-2-phosphoglycerate = (2R)-3-phosphoglycerate. It functions in the pathway carbohydrate degradation; glycolysis; pyruvate from D-glyceraldehyde 3-phosphate: step 3/5. Catalyzes the interconversion of 2-phosphoglycerate and 3-phosphoglycerate. This chain is 2,3-bisphosphoglycerate-dependent phosphoglycerate mutase, found in Cutibacterium acnes (strain DSM 16379 / KPA171202) (Propionibacterium acnes).